The primary structure comprises 224 residues: Phosphoribosylformylglycinamidine synthase subunit PurQ (224 aa).

A Glutamine amidotransferase type-1 domain is found at 4-224 (RIGIITFPGT…YSVLDGVLAG (221 aa)). Residue Cys-87 is the Nucleophile of the active site. Residues His-195 and Glu-197 contribute to the active site.

Part of the FGAM synthase complex composed of 1 PurL, 1 PurQ and 2 PurS subunits.

It localises to the cytoplasm. The catalysed reaction is N(2)-formyl-N(1)-(5-phospho-beta-D-ribosyl)glycinamide + L-glutamine + ATP + H2O = 2-formamido-N(1)-(5-O-phospho-beta-D-ribosyl)acetamidine + L-glutamate + ADP + phosphate + H(+). The enzyme catalyses L-glutamine + H2O = L-glutamate + NH4(+). It functions in the pathway purine metabolism; IMP biosynthesis via de novo pathway; 5-amino-1-(5-phospho-D-ribosyl)imidazole from N(2)-formyl-N(1)-(5-phospho-D-ribosyl)glycinamide: step 1/2. Functionally, part of the phosphoribosylformylglycinamidine synthase complex involved in the purines biosynthetic pathway. Catalyzes the ATP-dependent conversion of formylglycinamide ribonucleotide (FGAR) and glutamine to yield formylglycinamidine ribonucleotide (FGAM) and glutamate. The FGAM synthase complex is composed of three subunits. PurQ produces an ammonia molecule by converting glutamine to glutamate. PurL transfers the ammonia molecule to FGAR to form FGAM in an ATP-dependent manner. PurS interacts with PurQ and PurL and is thought to assist in the transfer of the ammonia molecule from PurQ to PurL. This chain is Phosphoribosylformylglycinamidine synthase subunit PurQ, found in Mycolicibacterium paratuberculosis (strain ATCC BAA-968 / K-10) (Mycobacterium paratuberculosis).